Consider the following 236-residue polypeptide: Eukaryotic translation initiation factor 3 subunit J (236 aa).

Residues 1–88 (MADDWESAAD…EAEAQRVASL (88 aa)) are disordered. Residues 28–46 (GEDEDEDIKDSWEDEEEKK) show a composition bias toward acidic residues. Basic and acidic residues-rich tracts occupy residues 47–58 (DEEKPTKTEAPA) and 68–77 (AKLEQQARLE).

The protein belongs to the eIF-3 subunit J family. In terms of assembly, component of the eukaryotic translation initiation factor 3 (eIF-3) complex. The eIF-3 complex interacts with pix.

The protein localises to the cytoplasm. In terms of biological role, component of the eukaryotic translation initiation factor 3 (eIF-3) complex, which is involved in protein synthesis of a specialized repertoire of mRNAs and, together with other initiation factors, stimulates binding of mRNA and methionyl-tRNAi to the 40S ribosome. The eIF-3 complex specifically targets and initiates translation of a subset of mRNAs involved in cell proliferation. The polypeptide is Eukaryotic translation initiation factor 3 subunit J (Drosophila erecta (Fruit fly)).